A 112-amino-acid polypeptide reads, in one-letter code: UPF0342 protein SPT_0901 (112 aa).

This sequence belongs to the UPF0342 family.

The chain is UPF0342 protein SPT_0901 from Streptococcus pneumoniae (strain Taiwan19F-14).